A 734-amino-acid chain; its full sequence is Photosystem I P700 chlorophyll a apoprotein A2 (734 aa).

The next 8 membrane-spanning stretches (helical) occupy residues 46 to 69, 135 to 158, 175 to 199, 273 to 291, 330 to 353, 369 to 395, 417 to 439, and 517 to 535; these read IFAS…FHVA, LYNG…LHLE, LNHH…HVAI, IAHH…GHMY, LHFQ…QHMY, AALY…IFFI, AIIS…LYVH, and FLVH…LILV. Residues Cys559 and Cys568 each contribute to the [4Fe-4S] cluster site. 2 consecutive transmembrane segments (helical) span residues 575–596 and 643–665; these read AFYL…YWHW and LAVW…MFLI. 3 residues coordinate chlorophyll a: His654, Met662, and Tyr670. Trp671 serves as a coordination point for phylloquinone. A helical membrane pass occupies residues 707-727; the sequence is LVGLAHFSVGYVFTYAAFLIA.

Belongs to the PsaA/PsaB family. The PsaA/B heterodimer binds the P700 chlorophyll special pair and subsequent electron acceptors. PSI consists of a core antenna complex that captures photons, and an electron transfer chain that converts photonic excitation into a charge separation. The eukaryotic PSI reaction center is composed of at least 11 subunits. P700 is a chlorophyll a/chlorophyll a' dimer, A0 is one or more chlorophyll a, A1 is one or both phylloquinones and FX is a shared 4Fe-4S iron-sulfur center. serves as cofactor.

The protein resides in the plastid. The protein localises to the chloroplast thylakoid membrane. It carries out the reaction reduced [plastocyanin] + hnu + oxidized [2Fe-2S]-[ferredoxin] = oxidized [plastocyanin] + reduced [2Fe-2S]-[ferredoxin]. Its function is as follows. PsaA and PsaB bind P700, the primary electron donor of photosystem I (PSI), as well as the electron acceptors A0, A1 and FX. PSI is a plastocyanin/cytochrome c6-ferredoxin oxidoreductase, converting photonic excitation into a charge separation, which transfers an electron from the donor P700 chlorophyll pair to the spectroscopically characterized acceptors A0, A1, FX, FA and FB in turn. Oxidized P700 is reduced on the lumenal side of the thylakoid membrane by plastocyanin or cytochrome c6. This Euglena gracilis protein is Photosystem I P700 chlorophyll a apoprotein A2.